A 243-amino-acid polypeptide reads, in one-letter code: Ribonuclease PH (243 aa).

Residues Arg-91 and 129–131 contribute to the phosphate site; that span reads GTR.

Belongs to the RNase PH family. As to quaternary structure, homohexameric ring arranged as a trimer of dimers.

It carries out the reaction tRNA(n+1) + phosphate = tRNA(n) + a ribonucleoside 5'-diphosphate. Functionally, phosphorolytic 3'-5' exoribonuclease that plays an important role in tRNA 3'-end maturation. Removes nucleotide residues following the 3'-CCA terminus of tRNAs; can also add nucleotides to the ends of RNA molecules by using nucleoside diphosphates as substrates, but this may not be physiologically important. Probably plays a role in initiation of 16S rRNA degradation (leading to ribosome degradation) during starvation. The chain is Ribonuclease PH from Burkholderia lata (strain ATCC 17760 / DSM 23089 / LMG 22485 / NCIMB 9086 / R18194 / 383).